The chain runs to 355 residues: Peptide chain release factor 1 (355 aa).

Gln-232 carries the post-translational modification N5-methylglutamine.

The protein belongs to the prokaryotic/mitochondrial release factor family. Post-translationally, methylated by PrmC. Methylation increases the termination efficiency of RF1.

It localises to the cytoplasm. In terms of biological role, peptide chain release factor 1 directs the termination of translation in response to the peptide chain termination codons UAG and UAA. In Kineococcus radiotolerans (strain ATCC BAA-149 / DSM 14245 / SRS30216), this protein is Peptide chain release factor 1.